The following is a 429-amino-acid chain: UDP-N-acetylglucosamine 1-carboxyvinyltransferase 2 (429 aa).

22 to 23 (KN) lines the phosphoenolpyruvate pocket. Arginine 92 lines the UDP-N-acetyl-alpha-D-glucosamine pocket. Residue cysteine 116 is the Proton donor of the active site. Cysteine 116 bears the 2-(S-cysteinyl)pyruvic acid O-phosphothioketal mark. UDP-N-acetyl-alpha-D-glucosamine is bound by residues 121-125 (RPIDQ), aspartate 305, and isoleucine 327.

This sequence belongs to the EPSP synthase family. MurA subfamily.

Its subcellular location is the cytoplasm. The enzyme catalyses phosphoenolpyruvate + UDP-N-acetyl-alpha-D-glucosamine = UDP-N-acetyl-3-O-(1-carboxyvinyl)-alpha-D-glucosamine + phosphate. It participates in cell wall biogenesis; peptidoglycan biosynthesis. Its function is as follows. Cell wall formation. Adds enolpyruvyl to UDP-N-acetylglucosamine. The polypeptide is UDP-N-acetylglucosamine 1-carboxyvinyltransferase 2 (Bacillus subtilis (strain 168)).